A 640-amino-acid chain; its full sequence is Threonine--tRNA ligase (640 aa).

Residues methionine 1 to threonine 63 enclose the TGS domain. The interval aspartate 242 to proline 533 is catalytic. Residues cysteine 334, histidine 385, and histidine 510 each contribute to the Zn(2+) site.

Belongs to the class-II aminoacyl-tRNA synthetase family. As to quaternary structure, homodimer. Requires Zn(2+) as cofactor.

The protein localises to the cytoplasm. The catalysed reaction is tRNA(Thr) + L-threonine + ATP = L-threonyl-tRNA(Thr) + AMP + diphosphate + H(+). In terms of biological role, catalyzes the attachment of threonine to tRNA(Thr) in a two-step reaction: L-threonine is first activated by ATP to form Thr-AMP and then transferred to the acceptor end of tRNA(Thr). In Halobacterium salinarum (strain ATCC 29341 / DSM 671 / R1), this protein is Threonine--tRNA ligase.